Reading from the N-terminus, the 100-residue chain is Small ribosomal subunit protein uS14c (100 aa).

The protein belongs to the universal ribosomal protein uS14 family. Part of the 30S ribosomal subunit.

It is found in the plastid. Its subcellular location is the chloroplast. Functionally, binds 16S rRNA, required for the assembly of 30S particles. The polypeptide is Small ribosomal subunit protein uS14c (Thalassiosira pseudonana (Marine diatom)).